Here is a 117-residue protein sequence, read N- to C-terminus: Large ribosomal subunit protein bL17 (117 aa).

It belongs to the bacterial ribosomal protein bL17 family. Part of the 50S ribosomal subunit. Contacts protein L32.

The sequence is that of Large ribosomal subunit protein bL17 from Campylobacter jejuni subsp. doylei (strain ATCC BAA-1458 / RM4099 / 269.97).